A 117-amino-acid chain; its full sequence is UPF0342 protein GWCH70_0629 (117 aa).

Belongs to the UPF0342 family.

The polypeptide is UPF0342 protein GWCH70_0629 (Geobacillus sp. (strain WCH70)).